Reading from the N-terminus, the 550-residue chain is Atherin (550 aa).

Positions 1–11 (MAGPPALPPPE) are enriched in pro residues. 2 disordered regions span residues 1–32 (MAGPPALPPPETAAAATTAAAAASSSAASPHY) and 93–468 (SYRN…KEKP). Positions 12–30 (TAAAATTAAAAASSSAASP) are enriched in low complexity. In terms of domain architecture, SAMD1-like winged helix (WH) spans 24–100 (SSSAASPHYQ…SISYRNAARV (77 aa)). Thr108 bears the Phosphothreonine mark. Residues 125–138 (APPPTPAPPPPPAP) are compositionally biased toward pro residues. Low complexity predominate over residues 139-160 (VAAAAAPARAPRAAAAAAAATA). Residue Ser163 is modified to Phosphoserine. Residues 170–179 (GPRAQRAAPL) are compositionally biased toward low complexity. 2 stretches are compositionally biased toward pro residues: residues 180 to 205 (AAPPPAPAAPPAAAPPAGPRRAPPPA) and 214 to 245 (PLPPPPQPPAPPQQQQQPPPPPPPQQPQPPPE). The span at 246 to 257 (GGAARAGGPARP) shows a compositional bias: low complexity. Ser270 bears the Phosphoserine mark. Over residues 290 to 300 (AAARGRLERTR) the composition is skewed to basic and acidic residues. Residues 337 to 355 (KEEEEEEEEDDEDDDDDVV) are compositionally biased toward acidic residues. Residues 437-448 (SPSPVPLPPGKP) show a composition bias toward pro residues. In terms of domain architecture, SAM spans 474–542 (WTVMDVVEYF…KVLQQGHFED (69 aa)).

In terms of assembly, homopolymerize into a closed pentameric ring. Interacts (via SAM domain) with L3MBTL3 (via SAM domain); the interaction mediates L3MBTL3 binding to chromatin. Interacts (via WH domain) with KDM1A; the interaction modulates KDM1A function.

It localises to the nucleus. The protein localises to the chromosome. Its subcellular location is the secreted. In terms of biological role, unmethylated CpG islands (CGIs)-binding protein which localizes to H3K4me3-decorated CGIs, where it acts as a transcriptional repressor. Tethers L3MBTL3 to chromatin and interacts with the KDM1A histone demethylase complex to modulate H3K4me2 and H3K4me3 levels at CGIs. Plays a role in atherogenesis by binding with LDL on cell surface and promoting LDL oxidation which leads to the formation of foam cell. In Oryctolagus cuniculus (Rabbit), this protein is Atherin (SAMD1).